A 759-amino-acid polypeptide reads, in one-letter code: Phosphoribosylformylglycinamidine synthase subunit PurL (759 aa).

Histidine 46 is a catalytic residue. The ATP site is built by tyrosine 49 and lysine 88. Glutamate 90 lines the Mg(2+) pocket. Residues serine 91–histidine 94 and arginine 113 contribute to the substrate site. Residue histidine 92 is the Proton acceptor of the active site. Aspartate 114 provides a ligand contact to Mg(2+). Substrate is bound at residue glutamine 237. A Mg(2+)-binding site is contributed by aspartate 265. Glutamate 309–glutamine 311 serves as a coordination point for substrate. The ATP site is built by aspartate 498 and glycine 535. Asparagine 536 provides a ligand contact to Mg(2+). Serine 538 lines the substrate pocket.

This sequence belongs to the FGAMS family. Monomer. Part of the FGAM synthase complex composed of 1 PurL, 1 PurQ and 2 PurS subunits.

It localises to the cytoplasm. The enzyme catalyses N(2)-formyl-N(1)-(5-phospho-beta-D-ribosyl)glycinamide + L-glutamine + ATP + H2O = 2-formamido-N(1)-(5-O-phospho-beta-D-ribosyl)acetamidine + L-glutamate + ADP + phosphate + H(+). The protein operates within purine metabolism; IMP biosynthesis via de novo pathway; 5-amino-1-(5-phospho-D-ribosyl)imidazole from N(2)-formyl-N(1)-(5-phospho-D-ribosyl)glycinamide: step 1/2. Its function is as follows. Part of the phosphoribosylformylglycinamidine synthase complex involved in the purines biosynthetic pathway. Catalyzes the ATP-dependent conversion of formylglycinamide ribonucleotide (FGAR) and glutamine to yield formylglycinamidine ribonucleotide (FGAM) and glutamate. The FGAM synthase complex is composed of three subunits. PurQ produces an ammonia molecule by converting glutamine to glutamate. PurL transfers the ammonia molecule to FGAR to form FGAM in an ATP-dependent manner. PurS interacts with PurQ and PurL and is thought to assist in the transfer of the ammonia molecule from PurQ to PurL. This is Phosphoribosylformylglycinamidine synthase subunit PurL from Anaeromyxobacter sp. (strain K).